Consider the following 191-residue polypeptide: Syndecan-2-A (191 aa).

A signal peptide spans 1-22 (MRNVWLIVPFALLAALSGETWA). At 23–137 (QADRDLYIDS…NLFHRTEVLA (115 aa)) the chain is on the extracellular side. A disordered region spans residues 32–60 (STESSGNYPVDDDDYSSGSGSGIPARGDD). O-linked (Xyl...) (glycosaminoglycan) serine glycosylation is found at Ser-36, Ser-48, Ser-50, and Ser-52. Residues 138-158 (AVIAGGGIGFLFAVFLILLLV) form a helical membrane-spanning segment. Residues 159 to 191 (YRMRKKDEGSYDLGERKPSSAVYQKAPTKEFYA) are Cytoplasmic-facing. The interval 168–191 (SYDLGERKPSSAVYQKAPTKEFYA) is disordered.

The protein belongs to the syndecan proteoglycan family. Post-translationally, O-glycosylated; contains both heparan sulfate and chondroitin sulfate.

It is found in the membrane. Its function is as follows. Cell surface proteoglycan. In Xenopus laevis (African clawed frog), this protein is Syndecan-2-A (sdc2-a).